The sequence spans 181 residues: MKYNKEKLKNKVYLAIIGMPHGIRGDVFVKILSADPQRFKSYGTLYDDMGRSYEIVTLRTQKNNAIVRFKGVENRNAAESLKGIHLYVMRDQLIDDLREDEFYQVDLIGLRVQEYGGKILGEVCGFCNFGAGDLLEIRLNTGKRMLIPFSKVAVPEICMDSGFLIVDPMAAGLRDGEENDQ.

Positions 99-172 (EDEFYQVDLI…FLIVDPMAAG (74 aa)) constitute a PRC barrel domain.

Belongs to the RimM family. Binds ribosomal protein uS19.

The protein localises to the cytoplasm. Functionally, an accessory protein needed during the final step in the assembly of 30S ribosomal subunit, possibly for assembly of the head region. Essential for efficient processing of 16S rRNA. May be needed both before and after RbfA during the maturation of 16S rRNA. It has affinity for free ribosomal 30S subunits but not for 70S ribosomes. The polypeptide is Ribosome maturation factor RimM (Bartonella tribocorum (strain CIP 105476 / IBS 506)).